Reading from the N-terminus, the 543-residue chain is CTP synthase (543 aa).

The segment at 1–266 is amidoligase domain; that stretch reads MTKFIFVTGG…DDIICERFGI (266 aa). Ser13 lines the CTP pocket. UTP is bound at residue Ser13. Residues 14–19 and Asp71 each bind ATP; that span reads SLGKGI. Residues Asp71 and Glu140 each contribute to the Mg(2+) site. Residues 147–149, 187–192, and Lys223 contribute to the CTP site; these read DIE and KTKPTQ. Residues 187 to 192 and Lys223 each bind UTP; that span reads KTKPTQ. One can recognise a Glutamine amidotransferase type-1 domain in the interval 291–543; that stretch reads TVAIVGKYVE…VKAAIDHQNI (253 aa). Gly354 is an L-glutamine binding site. Cys381 (nucleophile; for glutamine hydrolysis) is an active-site residue. Residues 382-385, Glu404, and Arg471 each bind L-glutamine; that span reads LGMQ. Catalysis depends on residues His516 and Glu518.

Belongs to the CTP synthase family. As to quaternary structure, homotetramer.

The enzyme catalyses UTP + L-glutamine + ATP + H2O = CTP + L-glutamate + ADP + phosphate + 2 H(+). The catalysed reaction is L-glutamine + H2O = L-glutamate + NH4(+). It carries out the reaction UTP + NH4(+) + ATP = CTP + ADP + phosphate + 2 H(+). The protein operates within pyrimidine metabolism; CTP biosynthesis via de novo pathway; CTP from UDP: step 2/2. Its activity is regulated as follows. Allosterically activated by GTP, when glutamine is the substrate; GTP has no effect on the reaction when ammonia is the substrate. The allosteric effector GTP functions by stabilizing the protein conformation that binds the tetrahedral intermediate(s) formed during glutamine hydrolysis. Inhibited by the product CTP, via allosteric rather than competitive inhibition. Functionally, catalyzes the ATP-dependent amination of UTP to CTP with either L-glutamine or ammonia as the source of nitrogen. Regulates intracellular CTP levels through interactions with the four ribonucleotide triphosphates. The sequence is that of CTP synthase from Psychrobacter sp. (strain PRwf-1).